A 1320-amino-acid chain; its full sequence is Myopalladin (1320 aa).

An interaction with CARP region spans residues 1–522 (MQDDSIEAST…FTCTASNKYG (522 aa)). Disordered stretches follow at residues 19 to 68 (SYLA…AFLS), 84 to 145 (NYDP…SETQ), and 165 to 271 (FKSH…PPRF). Basic and acidic residues-rich tracts occupy residues 23–35 (ETRH…RSRA) and 87–106 (PLEK…DQMK). At Ser101 the chain carries Phosphoserine. The segment covering 107 to 130 (HSPNLSFEPNFCQDNPRSPTSSKE) has biased composition (polar residues). Phosphoserine is present on Ser131. The segment covering 168-182 (HSSKRIRPRACKNHK) has biased composition (basic residues). Residues 186-201 (ESQNKVMQENSSSFSD) are compositionally biased toward polar residues. Residues 218–239 (DTRDNEVNHALEQQEAKRREAE) are compositionally biased toward basic and acidic residues. The stretch at 219–248 (TRDNEVNHALEQQEAKRREAEQAASEAAGG) forms a coiled coil. Residues 240–258 (QAASEAAGGDTTPGSSPSS) are compositionally biased toward low complexity. Position 251 is a phosphothreonine (Thr251). 2 Ig-like domains span residues 269-359 (PRFT…IYIE) and 435-531 (PVFT…AQLH). Intrachain disulfides connect Cys290–Cys341 and Cys456–Cys515. Residues 554–655 (AAIEPQPSPP…VKEPPPVLAK (102 aa)) are disordered. Residues 559–575 (QPSPPHSEPPSVEQPPK) show a composition bias toward pro residues. A Phosphoserine modification is found at Ser644. The interval 649 to 677 (PPPVLAKPKLDSTQLQQLHNQVLLEQHQL) is interaction with NEB. The residue at position 759 (Ser759) is a Phosphoserine. The interval 763-805 (LLVSHPSVQTKSPGGLSIQNEPLPPGPTEPTPPPFTFSIPSGN) is disordered. Positions 768 to 782 (PSVQTKSPGGLSIQN) are enriched in polar residues. Over residues 784 to 797 (PLPPGPTEPTPPPF) the composition is skewed to pro residues. Ser813, Ser818, Ser867, Ser907, and Ser928 each carry phosphoserine. Residues 844–876 (NAMGLPRSAPSMPSQGLAKKNTKSPQPVNDDNI) form a disordered region. 3 consecutive Ig-like domains span residues 945–1029 (PIFD…GRIS), 1073–1162 (PHFL…LELS), and 1172–1262 (PVIL…ARLD). Residues 945 to 1320 (PIFDKRLKHF…SRSVVESDEL (376 aa)) are interaction with ACTN. A disulfide bond links Cys1094 and Cys1146.

The protein belongs to the myotilin/palladin family. In terms of assembly, interacts with TTN/titin, NEB, NEBL, ACTN2 and CARP. In terms of tissue distribution, expressed in adult skeletal muscle and fetal heart.

It is found in the cytoplasm. The protein localises to the nucleus. Its subcellular location is the myofibril. The protein resides in the sarcomere. It localises to the z line. Component of the sarcomere that tethers together nebulin (skeletal muscle) and nebulette (cardiac muscle) to alpha-actinin, at the Z lines. This chain is Myopalladin (MYPN), found in Homo sapiens (Human).